The sequence spans 149 residues: MPTRFSKTRKHRGHVSAGKGRVGKHRKHPGGRGMAGGQHHHRTNLDKYHPGYFGKVGMRHFHLLRNHQWAPILNIEKLWTLVPAEAREKYVSGAATETAPVIDLLSHGYAKLLGKGRLPQVPIVVRARYVSAEAERKIKEAGGVIELVA.

2 stretches are compositionally biased toward basic residues: residues 1 to 14 (MPTR…HRGH) and 21 to 30 (RVGKHRKHPG). A disordered region spans residues 1–43 (MPTRFSKTRKHRGHVSAGKGRVGKHRKHPGGRGMAGGQHHHRT).

It belongs to the universal ribosomal protein uL15 family. In terms of assembly, component of the large ribosomal subunit (LSU). Mature N.crassa ribosomes consist of a small (40S) and a large (60S) subunit. The 40S small subunit contains 1 molecule of ribosomal RNA (18S rRNA) and at least 32 different proteins. The large 60S subunit contains 3 rRNA molecules (26S, 5.8S and 5S rRNA) and at least 42 different proteins.

It is found in the cytoplasm. Component of the ribosome, a large ribonucleoprotein complex responsible for the synthesis of proteins in the cell. The small ribosomal subunit (SSU) binds messenger RNAs (mRNAs) and translates the encoded message by selecting cognate aminoacyl-transfer RNA (tRNA) molecules. The large subunit (LSU) contains the ribosomal catalytic site termed the peptidyl transferase center (PTC), which catalyzes the formation of peptide bonds, thereby polymerizing the amino acids delivered by tRNAs into a polypeptide chain. The nascent polypeptides leave the ribosome through a tunnel in the LSU and interact with protein factors that function in enzymatic processing, targeting, and the membrane insertion of nascent chains at the exit of the ribosomal tunnel. This chain is Large ribosomal subunit protein uL15 (rpl-28), found in Neurospora crassa (strain ATCC 24698 / 74-OR23-1A / CBS 708.71 / DSM 1257 / FGSC 987).